Reading from the N-terminus, the 437-residue chain is UDP-N-acetylmuramate--L-alanine ligase (437 aa).

Residue 108–114 (GAHGKTS) participates in ATP binding.

Belongs to the MurCDEF family.

It is found in the cytoplasm. The enzyme catalyses UDP-N-acetyl-alpha-D-muramate + L-alanine + ATP = UDP-N-acetyl-alpha-D-muramoyl-L-alanine + ADP + phosphate + H(+). Its pathway is cell wall biogenesis; peptidoglycan biosynthesis. Functionally, cell wall formation. The chain is UDP-N-acetylmuramate--L-alanine ligase from Staphylococcus epidermidis (strain ATCC 12228 / FDA PCI 1200).